The chain runs to 493 residues: Glutamyl-tRNA(Gln) amidotransferase subunit A (493 aa).

Catalysis depends on charge relay system residues K79 and S159. S183 functions as the Acyl-ester intermediate in the catalytic mechanism.

It belongs to the amidase family. GatA subfamily. In terms of assembly, heterotrimer of A, B and C subunits.

It catalyses the reaction L-glutamyl-tRNA(Gln) + L-glutamine + ATP + H2O = L-glutaminyl-tRNA(Gln) + L-glutamate + ADP + phosphate + H(+). Functionally, allows the formation of correctly charged Gln-tRNA(Gln) through the transamidation of misacylated Glu-tRNA(Gln) in organisms which lack glutaminyl-tRNA synthetase. The reaction takes place in the presence of glutamine and ATP through an activated gamma-phospho-Glu-tRNA(Gln). The chain is Glutamyl-tRNA(Gln) amidotransferase subunit A from Agrobacterium fabrum (strain C58 / ATCC 33970) (Agrobacterium tumefaciens (strain C58)).